The primary structure comprises 717 residues: uncharacterized protein (717 aa).

This sequence belongs to the asfivirus C717R family.

It is found in the virion. This is an uncharacterized protein from African swine fever virus (isolate Tick/Malawi/Lil 20-1/1983) (ASFV).